The following is a 99-amino-acid chain: Nucleoid-associated protein SEQ_0368 (99 aa).

This sequence belongs to the YbaB/EbfC family. As to quaternary structure, homodimer.

Its subcellular location is the cytoplasm. The protein localises to the nucleoid. Its function is as follows. Binds to DNA and alters its conformation. May be involved in regulation of gene expression, nucleoid organization and DNA protection. This Streptococcus equi subsp. equi (strain 4047) protein is Nucleoid-associated protein SEQ_0368.